Consider the following 306-residue polypeptide: Curved DNA-binding protein (306 aa).

The region spanning 5–69 is the J domain; that stretch reads DYYAIMGVKP…QRRAEYDQMW (65 aa).

The protein resides in the cytoplasm. It localises to the nucleoid. Its function is as follows. DNA-binding protein that preferentially recognizes a curved DNA sequence. It is probably a functional analog of DnaJ; displays overlapping activities with DnaJ, but functions under different conditions, probably acting as a molecular chaperone in an adaptive response to environmental stresses other than heat shock. Lacks autonomous chaperone activity; binds native substrates and targets them for recognition by DnaK. Its activity is inhibited by the binding of CbpM. The polypeptide is Curved DNA-binding protein (Escherichia coli O157:H7).